We begin with the raw amino-acid sequence, 317 residues long: Testis-specific Y-encoded protein 1 (317 aa).

Disordered regions lie at residues 1–39 (MSRP…FQVV) and 91–118 (DEEQ…PGGP). Composition is skewed to basic and acidic residues over residues 15–26 (QGQEERERRSEE) and 95–112 (EQRP…EQGQ).

Belongs to the nucleosome assembly protein (NAP) family. Post-translationally, phosphorylated. In terms of tissue distribution, testis. Probably in spermatogonia.

It localises to the cytoplasm. The protein resides in the nucleus. May be involved in sperm differentiation and proliferation. The chain is Testis-specific Y-encoded protein 1 (TSPY1) from Bos taurus (Bovine).